The following is a 219-amino-acid chain: Tritrans,polycis-undecaprenyl-diphosphate synthase (geranylgeranyl-diphosphate specific) (219 aa).

Residue Asp-12 is part of the active site. Asp-12 is a Mg(2+) binding site. Residues 13 to 16 (GNRR), Trp-17, and 59 to 61 (SRD) contribute to the substrate site. The active-site Proton acceptor is Asn-62. Residues Arg-66, Arg-168, and 174–176 (RLS) contribute to the substrate site. Glu-187 serves as a coordination point for Mg(2+).

Belongs to the UPP synthase family. In terms of assembly, homodimer. Mg(2+) is required as a cofactor.

It carries out the reaction geranylgeranyl diphosphate + 7 isopentenyl diphosphate = tri-trans,hepta-cis-undecaprenyl diphosphate + 7 diphosphate. In terms of biological role, catalyzes the sequential condensation of isopentenyl diphosphate (IPP) with geranylgeranyl diphosphate (GGPP) to yield (2Z,6Z,10Z,14Z,18Z,22Z,26Z,30E,34E,38E)-undecaprenyl diphosphate (tritrans,heptacis-UPP). It is probably the precursor of glycosyl carrier lipids. The polypeptide is Tritrans,polycis-undecaprenyl-diphosphate synthase (geranylgeranyl-diphosphate specific) (Aeropyrum pernix (strain ATCC 700893 / DSM 11879 / JCM 9820 / NBRC 100138 / K1)).